Reading from the N-terminus, the 427-residue chain is UPF0229 protein YeaH (427 aa).

Over residues 79 to 90 (NDHFVQNDRIER) the composition is skewed to basic and acidic residues. The segment at 79–110 (NDHFVQNDRIERPQGGGGGSGSGQGQASQDGE) is disordered. Residues 92–102 (QGGGGGSGSGQ) are compositionally biased toward gly residues.

It belongs to the UPF0229 family.

This chain is UPF0229 protein YeaH, found in Shigella boydii serotype 18 (strain CDC 3083-94 / BS512).